A 129-amino-acid chain; its full sequence is Large ribosomal subunit protein bL12 (129 aa).

The protein belongs to the bacterial ribosomal protein bL12 family. In terms of assembly, homodimer. Part of the ribosomal stalk of the 50S ribosomal subunit. Forms a multimeric L10(L12)X complex, where L10 forms an elongated spine to which 2 to 4 L12 dimers bind in a sequential fashion. Binds GTP-bound translation factors.

Forms part of the ribosomal stalk which helps the ribosome interact with GTP-bound translation factors. Is thus essential for accurate translation. The sequence is that of Large ribosomal subunit protein bL12 from Fervidobacterium nodosum (strain ATCC 35602 / DSM 5306 / Rt17-B1).